Here is a 406-residue protein sequence, read N- to C-terminus: Acetate kinase (406 aa).

N10 is a binding site for Mg(2+). K17 provides a ligand contact to ATP. R92 provides a ligand contact to substrate. D151 acts as the Proton donor/acceptor in catalysis. Residues 211–215, 286–288, and 335–339 each bind ATP; these read HLGSG, DFR, and GIGEN. Residue E389 coordinates Mg(2+).

Belongs to the acetokinase family. In terms of assembly, homodimer. Requires Mg(2+) as cofactor. The cofactor is Mn(2+).

It localises to the cytoplasm. It catalyses the reaction acetate + ATP = acetyl phosphate + ADP. It participates in metabolic intermediate biosynthesis; acetyl-CoA biosynthesis; acetyl-CoA from acetate: step 1/2. Its function is as follows. Catalyzes the formation of acetyl phosphate from acetate and ATP. Can also catalyze the reverse reaction. This Buchnera aphidicola subsp. Cinara cedri (strain Cc) protein is Acetate kinase.